The chain runs to 270 residues: Dehydrodolichyl diphosphate synthase (270 aa).

This sequence belongs to the UPP synthase family.

Its subcellular location is the endoplasmic reticulum membrane. It participates in protein modification; protein glycosylation. Its function is as follows. Cis-prenyl transferase that adds multiple copies of isopentenyl pyrophosphate (IPP) to farnesyl pyrophosphate (FPP) to produce dehydrodolichyl diphosphate (Dedol-PP). In Encephalitozoon cuniculi (strain GB-M1) (Microsporidian parasite), this protein is Dehydrodolichyl diphosphate synthase (RER2).